The following is a 463-amino-acid chain: Glucagon-like peptide 1 receptor (463 aa).

Positions 1–21 are cleaved as a signal peptide; it reads MAVTPSLLRLALLLLGAVGRA. The Extracellular segment spans residues 22-139; that stretch reads GPRPQGATVS…KQGERNSPEE (118 aa). Intrachain disulfides connect C46–C71, C62–C104, and C85–C126. 3 N-linked (GlcNAc...) asparagine glycosylation sites follow: N63, N82, and N115. The helical transmembrane segment at 140–164 threads the bilayer; sequence QLLSLYIIYTVGYALSFSALVIASA. The Cytoplasmic segment spans residues 165–175; sequence ILVSFRHLHCT. The chain crosses the membrane as a helical span at residues 176–201; the sequence is RNYIHLNLFASFILRALSVFIKDAAL. The Extracellular portion of the chain corresponds to 202–227; it reads KWMYSTAAQQHQWDGLLSYQDSLGCR. C226 and C296 are oxidised to a cystine. Residues 228-251 form a helical membrane-spanning segment; sequence LVFLLMQYCVAANYYWLLVEGVYL. At 252–265 the chain is on the cytoplasmic side; the sequence is YTLLAFSVFSEQRI. The helical transmembrane segment at 266-290 threads the bilayer; it reads FKLYLSIGWGVPLLFVIPWGIVKYL. The Extracellular portion of the chain corresponds to 291–305; that stretch reads YEDEGCWTRNSNMNY. A helical membrane pass occupies residues 306-328; sequence WLIIRLPILFAIGVNFLVFIRVI. The Cytoplasmic portion of the chain corresponds to 329-348; that stretch reads CIVIAKLKANLMCKTDIKCR. At C341 the chain carries ADP-ribosylcysteine. The residue at position 348 (R348) is an ADP-ribosylarginine. A helical membrane pass occupies residues 349–370; that stretch reads LAKSTLTLIPLLGTHEVIFAFV. The segment at 352-355 is important for allosteric inhibitor binding; sequence STLT. Topologically, residues 371–383 are extracellular; that stretch reads MDEHARGTLRFVK. Residues 384–404 form a helical membrane-spanning segment; that stretch reads LFTELSFTSFQGFMVAVLYCF. At 405 to 463 the chain is on the cytoplasmic side; sequence VNNEVQMEFRKSWERWRLERLNIQRDSSMKPLKCPTSSVSSGATVGSSVYAATCQNSCS.

It belongs to the G-protein coupled receptor 2 family. As to quaternary structure, may form homodimers and heterodimers with GIPR. N-glycosylation enhances cell surface expression and lengthens receptor half-life by preventing degradation in the ER. As to expression, pancreatic islets, stomach, lung, rat insulinoma cell line.

It localises to the cell membrane. G-protein coupled receptor for glucagon-like peptide 1 (GLP-1). Ligand binding triggers activation of a signaling cascade that leads to the activation of adenylyl cyclase and increased intracellular cAMP levels. Plays a role in regulating insulin secretion in response to GLP-1. This is Glucagon-like peptide 1 receptor (Glp1r) from Rattus norvegicus (Rat).